We begin with the raw amino-acid sequence, 171 residues long: Adenine phosphoribosyltransferase (171 aa).

It belongs to the purine/pyrimidine phosphoribosyltransferase family. As to quaternary structure, homodimer.

It is found in the cytoplasm. The catalysed reaction is AMP + diphosphate = 5-phospho-alpha-D-ribose 1-diphosphate + adenine. Its pathway is purine metabolism; AMP biosynthesis via salvage pathway; AMP from adenine: step 1/1. In terms of biological role, catalyzes a salvage reaction resulting in the formation of AMP, that is energically less costly than de novo synthesis. The protein is Adenine phosphoribosyltransferase of Syntrophotalea carbinolica (strain DSM 2380 / NBRC 103641 / GraBd1) (Pelobacter carbinolicus).